The primary structure comprises 24 residues: Ranatuerin-4 (24 aa).

Cys-18 and Cys-24 are joined by a disulfide.

Belongs to the frog skin active peptide (FSAP) family. Ranatuerin subfamily. Expressed by the skin glands.

The protein resides in the secreted. Antibacterial activity against Gram-positive bacterium S.aureus (MIC=55 uM). Shows no detectable hemolytic activity towards human erythrocytes. The polypeptide is Ranatuerin-4 (Aquarana catesbeiana (American bullfrog)).